The sequence spans 262 residues: Pyridoxine 5'-phosphate synthase (262 aa).

3-amino-2-oxopropyl phosphate is bound at residue N6. 8–9 provides a ligand contact to 1-deoxy-D-xylulose 5-phosphate; that stretch reads DH. R17 lines the 3-amino-2-oxopropyl phosphate pocket. H42 (proton acceptor) is an active-site residue. 1-deoxy-D-xylulose 5-phosphate-binding residues include R44 and H49. The Proton acceptor role is filled by E69. T99 contacts 1-deoxy-D-xylulose 5-phosphate. The active-site Proton donor is H213. 3-amino-2-oxopropyl phosphate is bound by residues G214 and 235-236; that span reads GH.

It belongs to the PNP synthase family. In terms of assembly, homooctamer; tetramer of dimers.

It localises to the cytoplasm. It catalyses the reaction 3-amino-2-oxopropyl phosphate + 1-deoxy-D-xylulose 5-phosphate = pyridoxine 5'-phosphate + phosphate + 2 H2O + H(+). Its pathway is cofactor biosynthesis; pyridoxine 5'-phosphate biosynthesis; pyridoxine 5'-phosphate from D-erythrose 4-phosphate: step 5/5. Catalyzes the complicated ring closure reaction between the two acyclic compounds 1-deoxy-D-xylulose-5-phosphate (DXP) and 3-amino-2-oxopropyl phosphate (1-amino-acetone-3-phosphate or AAP) to form pyridoxine 5'-phosphate (PNP) and inorganic phosphate. This chain is Pyridoxine 5'-phosphate synthase, found in Wolinella succinogenes (strain ATCC 29543 / DSM 1740 / CCUG 13145 / JCM 31913 / LMG 7466 / NCTC 11488 / FDC 602W) (Vibrio succinogenes).